Reading from the N-terminus, the 548-residue chain is Membrane protein insertase YidC (548 aa).

A helical membrane pass occupies residues 6-26 (NLLVIALLFVSFMIWQAWEQD). Positions 28–56 (NPQPQTQQTTQTTTTAAGSAADQGVPASG) are disordered. Low complexity predominate over residues 29 to 42 (PQPQTQQTTQTTTT). The next 4 helical transmembrane spans lie at 350 to 370 (FVGN…GIMY), 424 to 444 (FPLI…MGSI), 458 to 478 (LSAQ…MFFI), and 499 to 519 (PVIF…YYIV).

Belongs to the OXA1/ALB3/YidC family. Type 1 subfamily. As to quaternary structure, interacts with the Sec translocase complex via SecD. Specifically interacts with transmembrane segments of nascent integral membrane proteins during membrane integration.

The protein localises to the cell inner membrane. Functionally, required for the insertion and/or proper folding and/or complex formation of integral membrane proteins into the membrane. Involved in integration of membrane proteins that insert both dependently and independently of the Sec translocase complex, as well as at least some lipoproteins. Aids folding of multispanning membrane proteins. The sequence is that of Membrane protein insertase YidC from Salmonella choleraesuis (strain SC-B67).